The primary structure comprises 1065 residues: MLRSFSGAGKCKCRIPVSRQPVCGRSLRISSTLTPWNQSRRAASTVTSLDSFPNVGEKLHGFTVQEKKHVPELHLTAVRLKHDKTDADYLHVAREDKNNVFGIGFKTNPPDATGVPHILEHTTLCGSEKYPIRDPFFKMLPRSLSNFMNAFTSADHTTYPFATTNRQDFQNLLSVYLDATLHPLLKEEDFRQEGWRLGPEDPRSILTQGEQSKGNLQSEDVVFKGVVYNEMKGQISDANYLYYIKYRESICPSLNNSGGDPQYITDLTHQQLVDFSKRNYHPSNAKILTYGDMPLSVHLKQIGEVLDGFEKGQADTDVKLPLDLSRGPLNVTVPGPIDTFASEDKQYKTSTSWYMGDTTDVVETFSVGILSSLLLDGYGSPMYRALIEGGLGSSFTPNTGLDSSGRVPIFSVGLTGVSEADAPKVKSTIKRVFEESLSSGFNDEKVQGFLHQLELALRHKTANFGIGVMEKTLSSWFNGSNPMKELSWNEVIDEFKKKYEQGGYLESLMQKYLMNDNCLTFTMVGTPSYNKDLDDQEMVRKEKKLSELVERHGSVEQAVSALAEEELQLLKIQEEAQNADLSCLPSLRVEDISREKERKPVRESKMDDIDVVWREAPTNGLTYFQALNSFEELPDDLRLLLPLFNDCIMRLGTGDKTMEQWEDLIKLKTGGITTSTLHTSSPTELGKFREGLQFSGYALDNNIPDMLQILTTLVTETDFTSPHAPAMIQELLRMTTNGALDAVAGSGHRYALNAAAAGLSRSFWVQEQQSGLAQLQATANLLRDAESSPERLAELIDKLRLIQSFAISKGSGLRVRMVCEPSSASQNEIVLQKWLAGLPRNRSPTSPLDHTSVNSVANRVFYDLPYKVYYSGLAMQTVPFIDPSSAPLSVLSQLLTHKYLHPEIREKGGAYGAGASNGPIKGFFAFTSYRDPNPVNSLKVFQNSGIFARDRAWSDRELAEAKLGIFQGLDAPMSVDEEGARYFMSGVTHEMDQRWREQVLDVTAKDVNEVAQKFLVEGSRQSICLLGEKKDWADSDDWEVRKLSMNASGEPVIDPLSQDGAVASA.

Residues 1–42 constitute a mitochondrion transit peptide; it reads MLRSFSGAGKCKCRIPVSRQPVCGRSLRISSTLTPWNQSRRA. H117 is a Zn(2+) binding site. Catalysis depends on E120, which acts as the Proton acceptor. H121 lines the Zn(2+) pocket. E193 is a catalytic residue. Residue E230 participates in Zn(2+) binding.

The protein belongs to the peptidase M16 family. PreP subfamily. Monomer and homodimer; homodimerization is induced by binding of the substrate. Zn(2+) serves as cofactor.

The protein localises to the mitochondrion intermembrane space. It localises to the mitochondrion matrix. In terms of biological role, degrades mitochondrial transit peptides after their cleavage in the intermembrane space or in the matrix, and presequence peptides; clearance of these peptides is required to keep the presequence processing machinery running. Preferentially cleaves the N-terminal side of paired basic amino acid residues. Also degrades other unstructured peptides. May function as an ATP-dependent peptidase as opposed to a metalloendopeptidase. This chain is Presequence protease, mitochondrial (cym1), found in Aspergillus fumigatus (strain ATCC MYA-4609 / CBS 101355 / FGSC A1100 / Af293) (Neosartorya fumigata).